The chain runs to 459 residues: MHNIHRRHFLKAAGAVTAGLITANITASTHANSVAPKPQNGKSVIGLIAPKMDVVRVGFIGVGERGFSHVEQFCHLEGVELKAICDTHQTVIDRAVAHIVKQNRPQPTVYTGDDLSYRDLLSRDDIDIVIISTPWEWHAPMAIETMESGKHAFVEVPLALTVEECWQIVDTAERTQKNCMMMENVNYGREELMVLNMVRQGVFGELLHGEAAYIHELRWQMKEIDHKTGSWRTYWHTKRNGNLYPTHGLGPVSQYMNINRGDRFDYLTSMSSPALGRALYAKREFPADHERNQLKYINGDINTSLIKTVKGRTIMVQHDTTTPRPYSRHNLLQGTNGVFAGFPNRIAVEHGGFGKSYHEWDMDMQKWYDKYDHPLWQRIGKEAEINGGHGGMDFVMLWRMVYCLRNGEALDQDVYDAASWSVVNILSEQSVNNRSNSVTFPDFTRGAWEHAKPLGIVGA.

The segment at residues 1–31 is a signal peptide (tat-type signal); it reads MHNIHRRHFLKAAGAVTAGLITANITASTHA. NAD(+) is bound by residues 64 to 65, Asp86, 135 to 138, 155 to 156, and Asn184; these read ER, WEWH, and EV. Substrate is bound by residues Tyr213, Arg232, 244 to 247, and Tyr326; that span reads YPTH. Tyr244 is a binding site for NAD(+).

Belongs to the Gfo/Idh/MocA family. Glycosyl hydrolase 109 subfamily. NAD(+) serves as cofactor. Post-translationally, predicted to be exported by the Tat system. The position of the signal peptide cleavage has not been experimentally proven.

Functionally, glycosidase. This is Glycosyl hydrolase family 109 protein from Shewanella putrefaciens (strain CN-32 / ATCC BAA-453).